A 208-amino-acid chain; its full sequence is Small ribosomal subunit protein uS4 (208 aa).

Residues 98–160 (RRLDNVVYRL…SKSKTRFVEI (63 aa)) form the S4 RNA-binding domain.

It belongs to the universal ribosomal protein uS4 family. As to quaternary structure, part of the 30S ribosomal subunit. Contacts protein S5. The interaction surface between S4 and S5 is involved in control of translational fidelity.

One of the primary rRNA binding proteins, it binds directly to 16S rRNA where it nucleates assembly of the body of the 30S subunit. In terms of biological role, with S5 and S12 plays an important role in translational accuracy. This chain is Small ribosomal subunit protein uS4, found in Caldicellulosiruptor bescii (strain ATCC BAA-1888 / DSM 6725 / KCTC 15123 / Z-1320) (Anaerocellum thermophilum).